Consider the following 111-residue polypeptide: uncharacterized protein (111 aa).

This is an uncharacterized protein from Schizosaccharomyces pombe (strain 972 / ATCC 24843) (Fission yeast).